The primary structure comprises 1286 residues: Lysine-specific demethylase JMJ705 (1286 aa).

A JmjN domain is found at 25–66 (APEFRPTAAEFADPVSYILKIEPAAAPYGICKVVPPLPPPPK). The interval 82–105 (PDDRSPSFPTRHQQVGLCPRRTRP) is disordered. Residues 201-367 (ETAWNMRGVA…IAKEAAIRRA (167 aa)) enclose the JmjC domain. Residues His244, Glu246, and His335 each coordinate Fe cation. The span at 641–679 (PNSSNNVGCVGTKLSSSSTERQERPSSQNAHCNGSSVIS) shows a compositional bias: polar residues. Disordered stretches follow at residues 641–686 (PNSS…KGVR), 1013–1060 (AEPV…HSQE), and 1077–1164 (PAGT…PKQA). Polar residues predominate over residues 1119–1136 (HASGQKSNVQEANANSAS). Residues 1167–1189 (YSCDIEGCSMSFRTKRDLSLHKS) form a C2H2-type 1; degenerate zinc finger. C2H2-type zinc fingers lie at residues 1190–1214 (DICP…RKVH), 1220–1244 (LTCP…LRVH), and 1250–1276 (YVCH…KTGH).

Requires Fe(2+) as cofactor. As to expression, expressed in leaves and flag leaves. Expressed at low levels in roots, shoots, stems and panicles.

It is found in the nucleus. The enzyme catalyses N(6),N(6),N(6)-trimethyl-L-lysyl(27)-[histone H3] + 2 2-oxoglutarate + 2 O2 = N(6)-methyl-L-lysyl(27)-[histone H3] + 2 formaldehyde + 2 succinate + 2 CO2. Its function is as follows. Histone demethylase that demethylates 'Lys-27' (H3K27me) of histone H3 with a specific activity for H3K27me3 and H3K27me2. No activity on H3K4me3, H3K9me3, H3K27me1 and H3K36me3. Involved in biotic stress response. May demethylate H3K27me3-marked defense-related genes and increase their basal and induced expression levels during pathogen infection. The protein is Lysine-specific demethylase JMJ705 (JMJ705) of Oryza sativa subsp. japonica (Rice).